The primary structure comprises 309 residues: Malate dehydrogenase (309 aa).

NAD(+)-binding positions include 9–14 (GAGFVG) and Asp-33. Arg-82 and Arg-88 together coordinate substrate. Residues Asn-95 and 118 to 120 (VNN) contribute to the NAD(+) site. Substrate-binding residues include Asn-120 and Arg-151. The active-site Proton acceptor is the His-175.

Belongs to the LDH/MDH superfamily. MDH type 3 family.

The catalysed reaction is (S)-malate + NAD(+) = oxaloacetate + NADH + H(+). Functionally, catalyzes the reversible oxidation of malate to oxaloacetate. This Roseiflexus sp. (strain RS-1) protein is Malate dehydrogenase.